The primary structure comprises 152 residues: MKKVVATGTFDIIHPGHVRFLEEAKKLGDYLVVIVAREKNVKHKPKPIMPEEQRRRVVEALKPVDEAILGDEEDIFKPIEKIKPDVIALGYDQHFDEEWLREELRKRGIKAEVVRIRAKEDCELCSSAKIIERIVTLASSRLKDFQERKEKL.

Residues 9–10 (TF), 14–17 (HPGH), and D92 contribute to the ATP site.

Belongs to the archaeal FAD synthase family. As to quaternary structure, homodimer. A divalent metal cation is required as a cofactor.

The enzyme catalyses FMN + ATP + H(+) = FAD + diphosphate. It participates in cofactor biosynthesis; FAD biosynthesis; FAD from FMN: step 1/1. Functionally, catalyzes the transfer of the AMP portion of ATP to flavin mononucleotide (FMN) to produce flavin adenine dinucleotide (FAD) coenzyme. The chain is FAD synthase from Ferroglobus placidus (strain DSM 10642 / AEDII12DO).